The sequence spans 239 residues: Ribosomal RNA small subunit methyltransferase G (239 aa).

S-adenosyl-L-methionine-binding positions include G77, F82, 128 to 129, and R146; that span reads AE. A disordered region spans residues 215 to 239; sequence DKRSQTPKKYPRKPGTPNKSPLLEK.

The protein belongs to the methyltransferase superfamily. RNA methyltransferase RsmG family.

The protein localises to the cytoplasm. Functionally, specifically methylates the N7 position of guanine in position 535 of 16S rRNA. This Staphylococcus saprophyticus subsp. saprophyticus (strain ATCC 15305 / DSM 20229 / NCIMB 8711 / NCTC 7292 / S-41) protein is Ribosomal RNA small subunit methyltransferase G.